The sequence spans 255 residues: NAD kinase (255 aa).

The Proton acceptor role is filled by aspartate 44. Residues 44 to 45 (DG), histidine 49, 114 to 115 (NE), aspartate 144, alanine 152, 155 to 160 (SAYNLS), and glutamine 216 each bind NAD(+).

Belongs to the NAD kinase family. A divalent metal cation is required as a cofactor.

Its subcellular location is the cytoplasm. The catalysed reaction is NAD(+) + ATP = ADP + NADP(+) + H(+). Functionally, involved in the regulation of the intracellular balance of NAD and NADP, and is a key enzyme in the biosynthesis of NADP. Catalyzes specifically the phosphorylation on 2'-hydroxyl of the adenosine moiety of NAD to yield NADP. This chain is NAD kinase, found in Rickettsia felis (strain ATCC VR-1525 / URRWXCal2) (Rickettsia azadi).